The sequence spans 330 residues: Aspartate--ammonia ligase (330 aa).

Belongs to the class-II aminoacyl-tRNA synthetase family. AsnA subfamily.

Its subcellular location is the cytoplasm. The enzyme catalyses L-aspartate + NH4(+) + ATP = L-asparagine + AMP + diphosphate + H(+). Its pathway is amino-acid biosynthesis; L-asparagine biosynthesis; L-asparagine from L-aspartate (ammonia route): step 1/1. The polypeptide is Aspartate--ammonia ligase (Escherichia coli O17:K52:H18 (strain UMN026 / ExPEC)).